The chain runs to 461 residues: Argininosuccinate lyase (461 aa).

The protein belongs to the lyase 1 family. Argininosuccinate lyase subfamily.

The protein resides in the cytoplasm. The enzyme catalyses 2-(N(omega)-L-arginino)succinate = fumarate + L-arginine. Its pathway is amino-acid biosynthesis; L-arginine biosynthesis; L-arginine from L-ornithine and carbamoyl phosphate: step 3/3. The polypeptide is Argininosuccinate lyase (Dehalococcoides mccartyi (strain ATCC BAA-2266 / KCTC 15142 / 195) (Dehalococcoides ethenogenes (strain 195))).